Reading from the N-terminus, the 241-residue chain is Small ribosomal subunit protein uS2 (241 aa).

Belongs to the universal ribosomal protein uS2 family.

In Pectobacterium atrosepticum (strain SCRI 1043 / ATCC BAA-672) (Erwinia carotovora subsp. atroseptica), this protein is Small ribosomal subunit protein uS2.